The sequence spans 549 residues: Zinc finger protein 18 (549 aa).

Positions arginine 41–proline 123 constitute an SCAN box domain. Residues aspartate 211–arginine 283 form the KRAB domain. C2H2-type zinc fingers lie at residues proline 408 to histidine 430, phenylalanine 436 to histidine 458, cysteine 464 to histidine 486, tyrosine 492 to histidine 514, and tyrosine 520 to histidine 542.

This sequence belongs to the krueppel C2H2-type zinc-finger protein family.

Its subcellular location is the nucleus. Its function is as follows. May be involved in transcriptional regulation. The protein is Zinc finger protein 18 (ZNF18) of Homo sapiens (Human).